The primary structure comprises 436 residues: Putative ankyrin repeat protein FPV245 (436 aa).

ANK repeat units follow at residues 1–30 (MSVDWRTEIYSGDISLVEKLIKNKGNCINI), 34–63 (ETTTPLIDAIRTGNAKIVELFIKHGAQVNH), 67–96 (KIPNPLLTAIKIGSHDIVKLLLINGVDTSI), 98–119 (PVPCINKEMIKTILDSGVKVNT), 123–152 (KSKTFLHYAIKNNDLEVIKMLFEYGADVNI), 156–185 (NGCYPIHIATRSNSYEIIKLLLEKGAYANV), 189–218 (YGNSPLHNAAKYGDYACIKLVLDHTNNISN), 222–252 (NGVTPLHNAILYNRSAVELLINNRSINDTDV), 253–283 (DGYTPLHYALQPPCSIDIIDILLYNNADISI), and 287–317 (NGRNPIDTAFKYINRDSVIKELLANAVLINE).

The protein is Putative ankyrin repeat protein FPV245 of Vertebrata (FPV).